A 443-amino-acid polypeptide reads, in one-letter code: MDSLTTLYKNHLDTLQERTRNVLARFNLDALLIHSGELFNVFLDDHPYPFKVNPQFKAWVPVTQVPNCWLLVDGVNKPKLWFYLPVDYWHNVEPLPSAFWTEEIDIIALPKADDIGGQLPAARGNIAYIGPVPERALKLDVPADKINPKGVIDYLHFYRAYKTDYELACMREAQKTAVNGHRAAHEAFLSGMSEFDINLAYLTATGHRDTDVPYSNIVALNEHAAVLHYTRLDHRAPSEMRSFLLDAGAEYNGYAADLTRTWAADGDSDFAALIKDVNEEQLALIGTMKAGVSYIDYHIQFHQRIAKLLRRHQIVTDISEEAMVEADITGPFMPHGIGHPLGLQVHDVAGFMQDDTGTHLAAPAKYPYLRCTRVLQPRMVLTIEPGIYFIESLLVPWREGPFSKHFNWQKIEALKPFGGIRIEDNVVIHEHGVENMTRDLKLA.

Asp-246, Asp-257, His-339, Glu-384, and Glu-423 together coordinate Mn(2+).

It belongs to the peptidase M24B family. Bacterial-type prolidase subfamily. The cofactor is Mn(2+).

The catalysed reaction is Xaa-L-Pro dipeptide + H2O = an L-alpha-amino acid + L-proline. Its function is as follows. Splits dipeptides with a prolyl residue in the C-terminal position. In Cronobacter sakazakii (strain ATCC BAA-894) (Enterobacter sakazakii), this protein is Xaa-Pro dipeptidase.